The sequence spans 49 residues: Large ribosomal subunit protein bL33B (49 aa).

The protein belongs to the bacterial ribosomal protein bL33 family.

In Lacticaseibacillus paracasei (strain ATCC 334 / BCRC 17002 / CCUG 31169 / CIP 107868 / KCTC 3260 / NRRL B-441) (Lactobacillus paracasei), this protein is Large ribosomal subunit protein bL33B.